The primary structure comprises 623 residues: Membrane protein insertase YidC (623 aa).

Helical transmembrane passes span 8–28 (LILA…LFPP), 379–399 (MGLA…PLAY), 449–469 (LPIL…FVTI), 507–527 (TTMA…SMWL), and 543–563 (IFAW…SGLV). Residues 601–617 (KPAAQPAGKAANDGAAP) are compositionally biased toward low complexity. The interval 601–623 (KPAAQPAGKAANDGAAPAKKRKP) is disordered.

The protein belongs to the OXA1/ALB3/YidC family. Type 1 subfamily. In terms of assembly, interacts with the Sec translocase complex via SecD. Specifically interacts with transmembrane segments of nascent integral membrane proteins during membrane integration.

The protein resides in the cell inner membrane. In terms of biological role, required for the insertion and/or proper folding and/or complex formation of integral membrane proteins into the membrane. Involved in integration of membrane proteins that insert both dependently and independently of the Sec translocase complex, as well as at least some lipoproteins. Aids folding of multispanning membrane proteins. The chain is Membrane protein insertase YidC from Cereibacter sphaeroides (strain ATCC 17029 / ATH 2.4.9) (Rhodobacter sphaeroides).